Here is a 256-residue protein sequence, read N- to C-terminus: Hydroxyethylthiazole kinase (256 aa).

Residue methionine 37 participates in substrate binding. ATP contacts are provided by lysine 113 and threonine 159. Residue glycine 186 coordinates substrate.

It belongs to the Thz kinase family. Mg(2+) serves as cofactor.

It catalyses the reaction 5-(2-hydroxyethyl)-4-methylthiazole + ATP = 4-methyl-5-(2-phosphooxyethyl)-thiazole + ADP + H(+). It functions in the pathway cofactor biosynthesis; thiamine diphosphate biosynthesis; 4-methyl-5-(2-phosphoethyl)-thiazole from 5-(2-hydroxyethyl)-4-methylthiazole: step 1/1. Catalyzes the phosphorylation of the hydroxyl group of 4-methyl-5-beta-hydroxyethylthiazole (THZ). The sequence is that of Hydroxyethylthiazole kinase from Exiguobacterium sibiricum (strain DSM 17290 / CCUG 55495 / CIP 109462 / JCM 13490 / 255-15).